The following is a 376-amino-acid chain: Queuine tRNA-ribosyltransferase (376 aa).

Residue Asp-89 is the Proton acceptor of the active site. Residues 89 to 93, Asp-143, Gln-194, and Gly-221 each bind substrate; that span reads DSGGF. Positions 252–258 are RNA binding; it reads GVGTPAN. Catalysis depends on Asp-271, which acts as the Nucleophile. Zn(2+) contacts are provided by Cys-309, Cys-311, Cys-314, and His-340.

Belongs to the queuine tRNA-ribosyltransferase family. In terms of assembly, homodimer. Within each dimer, one monomer is responsible for RNA recognition and catalysis, while the other monomer binds to the replacement base PreQ1. Requires Zn(2+) as cofactor.

The catalysed reaction is 7-aminomethyl-7-carbaguanine + guanosine(34) in tRNA = 7-aminomethyl-7-carbaguanosine(34) in tRNA + guanine. Its pathway is tRNA modification; tRNA-queuosine biosynthesis. Catalyzes the base-exchange of a guanine (G) residue with the queuine precursor 7-aminomethyl-7-deazaguanine (PreQ1) at position 34 (anticodon wobble position) in tRNAs with GU(N) anticodons (tRNA-Asp, -Asn, -His and -Tyr). Catalysis occurs through a double-displacement mechanism. The nucleophile active site attacks the C1' of nucleotide 34 to detach the guanine base from the RNA, forming a covalent enzyme-RNA intermediate. The proton acceptor active site deprotonates the incoming PreQ1, allowing a nucleophilic attack on the C1' of the ribose to form the product. After dissociation, two additional enzymatic reactions on the tRNA convert PreQ1 to queuine (Q), resulting in the hypermodified nucleoside queuosine (7-(((4,5-cis-dihydroxy-2-cyclopenten-1-yl)amino)methyl)-7-deazaguanosine). This chain is Queuine tRNA-ribosyltransferase, found in Clostridium kluyveri (strain NBRC 12016).